Reading from the N-terminus, the 820-residue chain is MRYDPSLIEKKWQQFWKEHKSFKADETADKPKYYVLDMFPYPSGAGLHVGHLIGYTATDIVARYKRAKGFSVLHPMGWDSFGLPAEQYAVRTGTHPRETTKKNIENFRKQLSAMGFSYDEAREFATSDPEYYRWTQKLFLFLYEKGLAYMADMAVNYCEELGTVLANEEVENGLSIEGGYPVERRMLRQWILRITAYADQLLQGLEDLDWPENVKQLQRNWIGKSEGALLRFVVDKDKCLEVFTTRPDTLCGVSFLVMAPEHPEIQQLVSEEQRSAVESYIRCAQSKSERERISETKVKSGVFTGAYAKHAITGAALPIWVSDYVIMGYGSGVVMGVPAHDERDREFANAFALPIDEVLDENEHCINSNHGDFLLNGLQGKEASDYVIAYLQKRNLGEAKVMYKLHDWLFSRQRYWGEPIPIIHFEDGTCRPLEDDELPLLPPEIQDYRPKGFGQGPLAKVKEWVDIHDVKTQRPGRRETHTMPQWAGSCWYYLRFCDAHNSQAPWSHENERYWMPVDLYIGGAEHAVLHLLYSRFWHRVFYEAGLVSTPEPFKKLINQGLVLATSYRIPGKGYVHPEDAREDNGKWTTASGEELEVRQEKMSKSKLNGVDPQILIDEFGADALRMYAMFSGPLDKNKLWCNQGVSGCRRFLNRFYELATSSAVQDIDDPKGMALAHRLVHKVGEDIEKMSLNTIPSSFMEFINEFAKLDTYSKSALSMVVRALAPIAPHISEELWTVLGYAPGIDNAGWPEVDPKYLEDTSVTFVIQVNGKLRARLDMDKNTSQEDILSAARESVAKYLEDKEIKKEVFVPNRLVNFVL.

Residues 40–51 (PYPSGAGLHVGH) carry the 'HIGH' region motif. Positions 601–605 (KMSKS) match the 'KMSKS' region motif. Lys-604 contributes to the ATP binding site.

The protein belongs to the class-I aminoacyl-tRNA synthetase family.

It is found in the cytoplasm. It catalyses the reaction tRNA(Leu) + L-leucine + ATP = L-leucyl-tRNA(Leu) + AMP + diphosphate. The sequence is that of Leucine--tRNA ligase from Chlamydia abortus (strain DSM 27085 / S26/3) (Chlamydophila abortus).